The chain runs to 297 residues: Aspartate carbamoyltransferase catalytic subunit (297 aa).

Positions 51 and 52 each coordinate carbamoyl phosphate. Position 79 (Lys-79) interacts with L-aspartate. Residues Arg-101, His-130, and Gln-133 each contribute to the carbamoyl phosphate site. L-aspartate is bound by residues Arg-163 and Arg-215. Gly-256 and Pro-257 together coordinate carbamoyl phosphate.

This sequence belongs to the aspartate/ornithine carbamoyltransferase superfamily. ATCase family. Heterododecamer (2C3:3R2) of six catalytic PyrB chains organized as two trimers (C3), and six regulatory PyrI chains organized as three dimers (R2).

The catalysed reaction is carbamoyl phosphate + L-aspartate = N-carbamoyl-L-aspartate + phosphate + H(+). Its pathway is pyrimidine metabolism; UMP biosynthesis via de novo pathway; (S)-dihydroorotate from bicarbonate: step 2/3. Functionally, catalyzes the condensation of carbamoyl phosphate and aspartate to form carbamoyl aspartate and inorganic phosphate, the committed step in the de novo pyrimidine nucleotide biosynthesis pathway. This is Aspartate carbamoyltransferase catalytic subunit from Ehrlichia ruminantium (strain Gardel).